A 396-amino-acid chain; its full sequence is NADH-quinone oxidoreductase subunit D (396 aa).

The protein belongs to the complex I 49 kDa subunit family. NDH-1 is composed of 14 different subunits. Subunits NuoB, C, D, E, F, and G constitute the peripheral sector of the complex.

It localises to the cell inner membrane. The enzyme catalyses a quinone + NADH + 5 H(+)(in) = a quinol + NAD(+) + 4 H(+)(out). Functionally, NDH-1 shuttles electrons from NADH, via FMN and iron-sulfur (Fe-S) centers, to quinones in the respiratory chain. The immediate electron acceptor for the enzyme in this species is believed to be ubiquinone. Couples the redox reaction to proton translocation (for every two electrons transferred, four hydrogen ions are translocated across the cytoplasmic membrane), and thus conserves the redox energy in a proton gradient. The chain is NADH-quinone oxidoreductase subunit D from Chelativorans sp. (strain BNC1).